Consider the following 504-residue polypeptide: MTLYLDGETLTIEDIKSFLQQQSKIEIIDDALERVKKSRAVVERIIENEETVYGITTGFGLFSDVRIDPTQYNELQVNLIRSHACGLGEPFSKEVALVMMILRLNTLLKGHSGATLELVRQLQFFINERIIPIIPQQGSLGASGDLAPLSHLALALIGEGKVLYRGEEKDSDDVLRELNRQPLNLQAKEGLALINGTQAMTAQGVISYIESEDLGYQSEWIAALTHQSLNGIIDAYRHDVHAVRNFQEQINVAARMRDWLEGSTLTTRQAEIRVQDAYTLRCIPQIHGASFQVFNYVKQQLEFEMNAANDNPLIFEEANETFVISGGNFHGQPIAFALDHLKLGVSELANVSERRLERLVNPQLNGDLPAFLSPEPGLQSGAMIMQYAAASLVSENKTLAHPASVDSITSSANQEDHVSMGTTAARHGYQIIENARRVLAIECVIALQAAELKGVEGLSPKTRRKYEEFRSIVPSITHDRQFHKDIEAVAQYLKQSIYQTTACH.

A cross-link (5-imidazolinone (Ala-Gly)) is located at residues 142–144 (ASG). S143 is subject to 2,3-didehydroalanine (Ser).

It belongs to the PAL/histidase family. Post-translationally, contains an active site 4-methylidene-imidazol-5-one (MIO), which is formed autocatalytically by cyclization and dehydration of residues Ala-Ser-Gly.

Its subcellular location is the cytoplasm. The catalysed reaction is L-histidine = trans-urocanate + NH4(+). It participates in amino-acid degradation; L-histidine degradation into L-glutamate; N-formimidoyl-L-glutamate from L-histidine: step 1/3. In Staphylococcus aureus (strain MSSA476), this protein is Histidine ammonia-lyase.